Consider the following 644-residue polypeptide: Polyglycine hydrolase (644 aa).

An N-terminal signal peptide occupies residues M1–S23. N100, N144, N159, N244, and N340 each carry an N-linked (GlcNAc...) asparagine glycan. A disulfide bridge connects residues C149 and C183. Residue S369 is part of the active site. N389, N410, N443, and N486 each carry an N-linked (GlcNAc...) asparagine glycan.

The protein belongs to the peptidase S12 family.

The protein localises to the secreted. It catalyses the reaction a glycyl-glycyl-[protein] + H2O = N-terminal glycyl-[protein] + [protein]-C-terminal glycine. With respect to regulation, not inhibited by phenylmethylsulfonyl fluoride (PMSF; serine peptidase class S1 inhibitor), clavulanic acid (beta-lactamase inhibitor) or ampicillin (penicillin-binding protein (PBP) inhibitor). Its function is as follows. Serine-type endopeptidase that cleaves Gly-Gly bonds in the polyglycine linker of host plant class IV chitinases to disrupt their chitin-binding, and thereby plays a role in lowering the defense responses of the host to the fungus. Degrades Z.mays Endochitinase A (CHIA). Has low proteolytic activity on Z.mays Endochitinase B (CHIB). In Cochliobolus carbonum (strain 26-R-13) (Maize leaf spot fungus), this protein is Polyglycine hydrolase.